Consider the following 139-residue polypeptide: MERTLSIVKPDGVERGLIGEVVRRLEKEGLKIIAMKMIHMTRAQAEGFYAVHRERPFFESLTTFMSSGPVVVMVLEGEDAILRYRTLMGATNYKDAAEGTIRRDFATEIERNVVHGSDAPDTAAFEIGYFFNSFEIMGR.

ATP contacts are provided by Lys9, Phe57, Arg85, Thr91, Arg102, and Asn112. His115 (pros-phosphohistidine intermediate) is an active-site residue.

The protein belongs to the NDK family. In terms of assembly, homotetramer. Requires Mg(2+) as cofactor.

The protein resides in the cytoplasm. It catalyses the reaction a 2'-deoxyribonucleoside 5'-diphosphate + ATP = a 2'-deoxyribonucleoside 5'-triphosphate + ADP. The enzyme catalyses a ribonucleoside 5'-diphosphate + ATP = a ribonucleoside 5'-triphosphate + ADP. Major role in the synthesis of nucleoside triphosphates other than ATP. The ATP gamma phosphate is transferred to the NDP beta phosphate via a ping-pong mechanism, using a phosphorylated active-site intermediate. The polypeptide is Nucleoside diphosphate kinase (Desulfosudis oleivorans (strain DSM 6200 / JCM 39069 / Hxd3) (Desulfococcus oleovorans)).